Reading from the N-terminus, the 154-residue chain is Peptide methionine sulfoxide reductase MsrB (154 aa).

The MsrB domain maps to 28-150; it reads DQQWREQLSE…NSVSLIFNKI (123 aa). C67, C70, C116, and C119 together coordinate Zn(2+). The active-site Nucleophile is the C139.

Belongs to the MsrB Met sulfoxide reductase family. Zn(2+) serves as cofactor.

It carries out the reaction L-methionyl-[protein] + [thioredoxin]-disulfide + H2O = L-methionyl-(R)-S-oxide-[protein] + [thioredoxin]-dithiol. The protein is Peptide methionine sulfoxide reductase MsrB of Vibrio vulnificus (strain YJ016).